A 321-amino-acid polypeptide reads, in one-letter code: tRNA(Ile)-lysidine synthase (321 aa).

30 to 35 (SGGSDS) contacts ATP.

This sequence belongs to the tRNA(Ile)-lysidine synthase family.

The protein localises to the cytoplasm. The enzyme catalyses cytidine(34) in tRNA(Ile2) + L-lysine + ATP = lysidine(34) in tRNA(Ile2) + AMP + diphosphate + H(+). Ligates lysine onto the cytidine present at position 34 of the AUA codon-specific tRNA(Ile) that contains the anticodon CAU, in an ATP-dependent manner. Cytidine is converted to lysidine, thus changing the amino acid specificity of the tRNA from methionine to isoleucine. The polypeptide is tRNA(Ile)-lysidine synthase (Chlamydia trachomatis serovar A (strain ATCC VR-571B / DSM 19440 / HAR-13)).